A 667-amino-acid chain; its full sequence is Transketolase (667 aa).

H27 is a binding site for substrate. Thiamine diphosphate contacts are provided by residues H67 and 115–117 (GPL). Residue D156 coordinates Mg(2+). Residues G157 and N186 each coordinate thiamine diphosphate. Residues N186 and I188 each contribute to the Mg(2+) site. Positions 262, 357, and 384 each coordinate substrate. A thiamine diphosphate-binding site is contributed by H262. The Proton donor role is filled by E411. F437 contributes to the thiamine diphosphate binding site. H461, D469, and R520 together coordinate substrate.

Belongs to the transketolase family. In terms of assembly, homodimer. The cofactor is Mg(2+). Ca(2+) is required as a cofactor. It depends on Mn(2+) as a cofactor. Requires Co(2+) as cofactor. Thiamine diphosphate serves as cofactor.

The catalysed reaction is D-sedoheptulose 7-phosphate + D-glyceraldehyde 3-phosphate = aldehydo-D-ribose 5-phosphate + D-xylulose 5-phosphate. Functionally, catalyzes the transfer of a two-carbon ketol group from a ketose donor to an aldose acceptor, via a covalent intermediate with the cofactor thiamine pyrophosphate. This Bacillus subtilis (strain 168) protein is Transketolase (tkt).